The primary structure comprises 294 residues: MTHMFEGVGVALATPFTNNEVDFDALERHVQFLLDNNIQAIIVNGTTAESPTLTDEEKEKVLATVVKLVNHNVPVIAGTGTNNTYKSIQASIRAKEIGADAVMLITPYYNKTNQRGLIQHFETIANEVKLPVILYNVPSRTNMTIEPETVEILSHNPYIVALKDATNDFEYFDEVKQRINANEFALYSGNDDNVVKFYQRGGNGVISVIANVIPQEFQYLYDNRQNETDITNYFKPIEKLLEALSLDVNPIPIKVLTAYLGYGHYEVRLPLVPLEEAQCKQVERAFEQFKAGEQ.

A pyruvate-binding site is contributed by T47. The Proton donor/acceptor role is filled by Y135. K163 (schiff-base intermediate with substrate) is an active-site residue. I206 is a binding site for pyruvate.

It belongs to the DapA family. As to quaternary structure, homodimer.

Its subcellular location is the cytoplasm. The catalysed reaction is L-aspartate 4-semialdehyde + pyruvate = (2S,4S)-4-hydroxy-2,3,4,5-tetrahydrodipicolinate + H2O + H(+). It participates in amino-acid biosynthesis; L-lysine biosynthesis via DAP pathway; (S)-tetrahydrodipicolinate from L-aspartate: step 3/4. In terms of biological role, catalyzes the condensation of (S)-aspartate-beta-semialdehyde [(S)-ASA] and pyruvate to 4-hydroxy-tetrahydrodipicolinate (HTPA). The protein is 4-hydroxy-tetrahydrodipicolinate synthase of Staphylococcus epidermidis (strain ATCC 35984 / DSM 28319 / BCRC 17069 / CCUG 31568 / BM 3577 / RP62A).